The chain runs to 335 residues: UPF0353 protein Mflv_3659 (335 aa).

A run of 2 helical transmembrane segments spans residues 18–38 and 67–87; these read WFFL…VVQL and LPAV…AGPT. A VWFA domain is found at 98–294; the sequence is VVMLVIDVSQ…EQLKQVFTNL (197 aa). The helical transmembrane segment at 309–329 threads the bilayer; the sequence is VGWLRLGAGVLALAALGALLI.

Belongs to the UPF0353 family.

The protein localises to the cell membrane. This Mycolicibacterium gilvum (strain PYR-GCK) (Mycobacterium gilvum (strain PYR-GCK)) protein is UPF0353 protein Mflv_3659.